The chain runs to 492 residues: uncharacterized protein (492 aa).

12 helical membrane passes run 13–33 (LGFILASVGSAIGLGNIWRFG), 42–62 (GAFLIPYIVALLCVGIPLMIL), 97–117 (FIITSYYVVIIAWCLYYLIIL), 150–170 (GILVSTLAVWGIVALILSAGI), 180–200 (IMIPFLLFLIILLVLNALTLP), 222–242 (VWLSAFSQIFFSLSLGFGILI), 258–278 (AVTVSLLNCGFSFLAGFAVFG), 320–340 (FGIVFFLALVFAGISSAVSIV), 359–379 (LLAVLALFIIISPIFTTGAGL), 391–411 (GYLLPIAAILEIIIAIWLFGG), 428–448 (VWWKYLAGVVSPIILTAVVFL), and 463–483 (TTYVIFGALIIPLAFVVSVIL).

This sequence belongs to the sodium:neurotransmitter symporter (SNF) (TC 2.A.22) family.

Its subcellular location is the cell membrane. Its function is as follows. Putative sodium-dependent transporter. This is an uncharacterized protein from Methanocaldococcus jannaschii (strain ATCC 43067 / DSM 2661 / JAL-1 / JCM 10045 / NBRC 100440) (Methanococcus jannaschii).